We begin with the raw amino-acid sequence, 274 residues long: Thymidylate synthase (274 aa).

Arginine 21 contributes to the dUMP binding site. Histidine 51 contributes to the (6R)-5,10-methylene-5,6,7,8-tetrahydrofolate binding site. 123 to 124 (RR) provides a ligand contact to dUMP. The active-site Nucleophile is cysteine 156. DUMP-binding positions include 176 to 179 (RSAD), asparagine 187, and 217 to 219 (HIY). Aspartate 179 lines the (6R)-5,10-methylene-5,6,7,8-tetrahydrofolate pocket. Position 273 (alanine 273) interacts with (6R)-5,10-methylene-5,6,7,8-tetrahydrofolate.

The protein belongs to the thymidylate synthase family. Bacterial-type ThyA subfamily. In terms of assembly, homodimer.

It localises to the cytoplasm. It carries out the reaction dUMP + (6R)-5,10-methylene-5,6,7,8-tetrahydrofolate = 7,8-dihydrofolate + dTMP. Its pathway is pyrimidine metabolism; dTTP biosynthesis. In terms of biological role, catalyzes the reductive methylation of 2'-deoxyuridine-5'-monophosphate (dUMP) to 2'-deoxythymidine-5'-monophosphate (dTMP) while utilizing 5,10-methylenetetrahydrofolate (mTHF) as the methyl donor and reductant in the reaction, yielding dihydrofolate (DHF) as a by-product. This enzymatic reaction provides an intracellular de novo source of dTMP, an essential precursor for DNA biosynthesis. The sequence is that of Thymidylate synthase from Christiangramia forsetii (strain DSM 17595 / CGMCC 1.15422 / KT0803) (Gramella forsetii).